Here is a 322-residue protein sequence, read N- to C-terminus: Cytochrome f (322 aa).

A signal peptide spans 1-35 (MQTRNTFSWTWIREEITRSISVSLMIYIITWSSIS). Heme-binding residues include Tyr38, Cys58, Cys61, and His62. Residues 288-308 (VQGLLFFLGSVVLAQIFLVLK) form a helical membrane-spanning segment.

This sequence belongs to the cytochrome f family. As to quaternary structure, the 4 large subunits of the cytochrome b6-f complex are cytochrome b6, subunit IV (17 kDa polypeptide, petD), cytochrome f and the Rieske protein, while the 4 small subunits are PetG, PetL, PetM and PetN. The complex functions as a dimer. Heme is required as a cofactor.

The protein localises to the plastid. It is found in the chloroplast thylakoid membrane. Component of the cytochrome b6-f complex, which mediates electron transfer between photosystem II (PSII) and photosystem I (PSI), cyclic electron flow around PSI, and state transitions. This chain is Cytochrome f, found in Aethionema grandiflorum (Persian stone-cress).